A 378-amino-acid chain; its full sequence is Queuine tRNA-ribosyltransferase (378 aa).

The Proton acceptor role is filled by aspartate 90. Substrate is bound by residues 90 to 94 (DSGGY), aspartate 152, glutamine 194, and glycine 223. Positions 254 to 260 (GVGKPED) are RNA binding. Residue aspartate 273 is the Nucleophile of the active site. The RNA binding; important for wobble base 34 recognition stretch occupies residues 278–282 (TRNAR). Cysteine 311, cysteine 313, cysteine 316, and histidine 342 together coordinate Zn(2+).

It belongs to the queuine tRNA-ribosyltransferase family. In terms of assembly, homodimer. Within each dimer, one monomer is responsible for RNA recognition and catalysis, while the other monomer binds to the replacement base PreQ1. The cofactor is Zn(2+).

It carries out the reaction 7-aminomethyl-7-carbaguanine + guanosine(34) in tRNA = 7-aminomethyl-7-carbaguanosine(34) in tRNA + guanine. The protein operates within tRNA modification; tRNA-queuosine biosynthesis. Functionally, catalyzes the base-exchange of a guanine (G) residue with the queuine precursor 7-aminomethyl-7-deazaguanine (PreQ1) at position 34 (anticodon wobble position) in tRNAs with GU(N) anticodons (tRNA-Asp, -Asn, -His and -Tyr). Catalysis occurs through a double-displacement mechanism. The nucleophile active site attacks the C1' of nucleotide 34 to detach the guanine base from the RNA, forming a covalent enzyme-RNA intermediate. The proton acceptor active site deprotonates the incoming PreQ1, allowing a nucleophilic attack on the C1' of the ribose to form the product. After dissociation, two additional enzymatic reactions on the tRNA convert PreQ1 to queuine (Q), resulting in the hypermodified nucleoside queuosine (7-(((4,5-cis-dihydroxy-2-cyclopenten-1-yl)amino)methyl)-7-deazaguanosine). This chain is Queuine tRNA-ribosyltransferase, found in Aquifex aeolicus (strain VF5).